Here is a 151-residue protein sequence, read N- to C-terminus: Probable transcriptional regulator syrB3 (151 aa).

Residues 1–65 (MVDESNAGPV…QERSEKLRLI (65 aa)) are disordered. The segment covering 7-23 (AGPVAPAVVADAEVKAP) has biased composition (low complexity). Basic and acidic residues predominate over residues 52–65 (GYSEQERSEKLRLI).

It belongs to the SyrB family.

In Rhizobium meliloti (strain 1021) (Ensifer meliloti), this protein is Probable transcriptional regulator syrB3 (syrB3).